Here is a 95-residue protein sequence, read N- to C-terminus: Cytochrome b (95 aa).

3 consecutive transmembrane segments (helical) span residues 1 to 16 (GLCLASQLLTGLFLAM), 40 to 61 (WLIRNMHANGASFFFICIYLHI), and 76 to 95 (WNIGVVLLLLVMMTAFVGYV). His46 and His60 together coordinate heme b.

Belongs to the cytochrome b family. The cytochrome bc1 complex contains 3 respiratory subunits (MT-CYB, CYC1 and UQCRFS1), 2 core proteins (UQCRC1 and UQCRC2) and probably 6 low-molecular weight proteins. The cofactor is heme b.

Its subcellular location is the mitochondrion inner membrane. Component of the ubiquinol-cytochrome c reductase complex (complex III or cytochrome b-c1 complex) that is part of the mitochondrial respiratory chain. The b-c1 complex mediates electron transfer from ubiquinol to cytochrome c. Contributes to the generation of a proton gradient across the mitochondrial membrane that is then used for ATP synthesis. This chain is Cytochrome b (mt-cyb), found in Gomphosus varius (Bird wrasse).